The chain runs to 286 residues: NAD kinase (286 aa).

The Proton acceptor role is filled by Asp66. NAD(+)-binding positions include 66 to 67 (DG), 137 to 138 (ND), Arg148, Arg165, Asp167, and 178 to 183 (TAYSMS).

It belongs to the NAD kinase family. A divalent metal cation serves as cofactor.

The protein localises to the cytoplasm. It catalyses the reaction NAD(+) + ATP = ADP + NADP(+) + H(+). Its function is as follows. Involved in the regulation of the intracellular balance of NAD and NADP, and is a key enzyme in the biosynthesis of NADP. Catalyzes specifically the phosphorylation on 2'-hydroxyl of the adenosine moiety of NAD to yield NADP. The polypeptide is NAD kinase (Chlorobium chlorochromatii (strain CaD3)).